The sequence spans 489 residues: Adenylosuccinate synthetase 2, chloroplastic (489 aa).

A chloroplast-targeting transit peptide spans 1–45; it reads MPFSPPCLDPAAAAAASLSFLPAAAARPPAPCAVAPRSRRALRVA. Residues 76 to 82 and 104 to 106 contribute to the GTP site; these read GDEGKGK and GHT. Asp77 functions as the Proton acceptor in the catalytic mechanism. Positions 77 and 104 each coordinate Mg(2+). IMP-binding positions include 77 to 80, 102 to 105, Thr194, Arg208, Gln288, Thr303, and Arg367; these read DEGK and NAGH. His105 functions as the Proton donor in the catalytic mechanism. 363–369 contacts substrate; sequence TTTGRPR. GTP is bound by residues Arg369, 395 to 397, and 478 to 480; these read KLD and GVG.

The protein belongs to the adenylosuccinate synthetase family. As to quaternary structure, homodimer. The cofactor is Mg(2+).

The protein localises to the plastid. Its subcellular location is the chloroplast. It catalyses the reaction IMP + L-aspartate + GTP = N(6)-(1,2-dicarboxyethyl)-AMP + GDP + phosphate + 2 H(+). It participates in purine metabolism; AMP biosynthesis via de novo pathway; AMP from IMP: step 1/2. In terms of biological role, plays an important role in the de novo pathway and in the salvage pathway of purine nucleotide biosynthesis. Catalyzes the first committed step in the biosynthesis of AMP from IMP. In Oryza sativa subsp. japonica (Rice), this protein is Adenylosuccinate synthetase 2, chloroplastic.